Reading from the N-terminus, the 241-residue chain is tRNA (guanine-N(7)-)-methyltransferase (241 aa).

4 residues coordinate S-adenosyl-L-methionine: Glu76, Glu101, Asp128, and Asp150. Asp150 is an active-site residue. Residues Lys154, Asp186, and 219–222 (TRYE) contribute to the substrate site.

It belongs to the class I-like SAM-binding methyltransferase superfamily. TrmB family.

The enzyme catalyses guanosine(46) in tRNA + S-adenosyl-L-methionine = N(7)-methylguanosine(46) in tRNA + S-adenosyl-L-homocysteine. The protein operates within tRNA modification; N(7)-methylguanine-tRNA biosynthesis. Catalyzes the formation of N(7)-methylguanine at position 46 (m7G46) in tRNA. The sequence is that of tRNA (guanine-N(7)-)-methyltransferase from Cereibacter sphaeroides (strain ATCC 17023 / DSM 158 / JCM 6121 / CCUG 31486 / LMG 2827 / NBRC 12203 / NCIMB 8253 / ATH 2.4.1.) (Rhodobacter sphaeroides).